Reading from the N-terminus, the 1563-residue chain is Pentafunctional AROM polypeptide (1563 aa).

Residues 1–382 (MAESSSNPTR…YEPKASVVED (382 aa)) are 3-dehydroquinate synthase. NAD(+) contacts are provided by residues 48-50 (DTN), 82-85 (EYSK), 113-115 (GGV), and Asp118. Arg129 contacts 7-phospho-2-dehydro-3-deoxy-D-arabino-heptonate. 138–139 (TT) is a binding site for NAD(+). Positions 145 and 151 each coordinate 7-phospho-2-dehydro-3-deoxy-D-arabino-heptonate. Lys160 is a binding site for NAD(+). Asn161 provides a ligand contact to 7-phospho-2-dehydro-3-deoxy-D-arabino-heptonate. Residues 178–181 (FLNT) and Asn189 contribute to the NAD(+) site. Glu193 contributes to the Zn(2+) binding site. 7-phospho-2-dehydro-3-deoxy-D-arabino-heptonate-binding positions include 193 to 196 (EVIK) and Lys248. Glu258 (proton acceptor; for 3-dehydroquinate synthase activity) is an active-site residue. Residues 262-266 (RNLLN) and His269 contribute to the 7-phospho-2-dehydro-3-deoxy-D-arabino-heptonate site. His269 serves as a coordination point for Zn(2+). His273 (proton acceptor; for 3-dehydroquinate synthase activity) is an active-site residue. 7-phospho-2-dehydro-3-deoxy-D-arabino-heptonate contacts are provided by His285 and Lys354. His285 serves as a coordination point for Zn(2+). Residues 395–834 (VHAGVPKDLK…WDTMSNYFKS (440 aa)) are EPSP synthase. Cys816 acts as the For EPSP synthase activity in catalysis. The segment covering 836 to 850 (LEGEEEPHSSHVSHE) has biased composition (basic and acidic residues). The tract at residues 836-857 (LEGEEEPHSSHVSHEKPRKGNP) is disordered. Residues 857-1051 (PKSIFIIGMR…KKKPQSSFVS (195 aa)) form a shikimate kinase region. 864-871 (GMRGAGKS) serves as a coordination point for ATP. The segment at 1052 to 1265 (LTVPNVSKAL…AAPGQLSAAE (214 aa)) is 3-dehydroquinase. Catalysis depends on His1168, which acts as the Proton acceptor; for 3-dehydroquinate dehydratase activity. The active-site Schiff-base intermediate with substrate; for 3-dehydroquinate dehydratase activity is the Lys1196. Residues 1278-1563 (PRSFYLFGKP…TDAQAAVMGN (286 aa)) form a shikimate dehydrogenase region.

It in the N-terminal section; belongs to the sugar phosphate cyclases superfamily. Dehydroquinate synthase family. The protein in the 2nd section; belongs to the EPSP synthase family. In the 3rd section; belongs to the shikimate kinase family. This sequence in the 4th section; belongs to the type-I 3-dehydroquinase family. It in the C-terminal section; belongs to the shikimate dehydrogenase family. As to quaternary structure, homodimer. The cofactor is Zn(2+).

It localises to the cytoplasm. It catalyses the reaction 7-phospho-2-dehydro-3-deoxy-D-arabino-heptonate = 3-dehydroquinate + phosphate. It carries out the reaction 3-dehydroquinate = 3-dehydroshikimate + H2O. The enzyme catalyses shikimate + NADP(+) = 3-dehydroshikimate + NADPH + H(+). The catalysed reaction is shikimate + ATP = 3-phosphoshikimate + ADP + H(+). It catalyses the reaction 3-phosphoshikimate + phosphoenolpyruvate = 5-O-(1-carboxyvinyl)-3-phosphoshikimate + phosphate. It participates in metabolic intermediate biosynthesis; chorismate biosynthesis; chorismate from D-erythrose 4-phosphate and phosphoenolpyruvate: step 2/7. Its pathway is metabolic intermediate biosynthesis; chorismate biosynthesis; chorismate from D-erythrose 4-phosphate and phosphoenolpyruvate: step 3/7. It functions in the pathway metabolic intermediate biosynthesis; chorismate biosynthesis; chorismate from D-erythrose 4-phosphate and phosphoenolpyruvate: step 4/7. The protein operates within metabolic intermediate biosynthesis; chorismate biosynthesis; chorismate from D-erythrose 4-phosphate and phosphoenolpyruvate: step 5/7. It participates in metabolic intermediate biosynthesis; chorismate biosynthesis; chorismate from D-erythrose 4-phosphate and phosphoenolpyruvate: step 6/7. Functionally, the AROM polypeptide catalyzes 5 consecutive enzymatic reactions in prechorismate polyaromatic amino acid biosynthesis. The chain is Pentafunctional AROM polypeptide from Sordaria macrospora (strain ATCC MYA-333 / DSM 997 / K(L3346) / K-hell).